Consider the following 96-residue polypeptide: Protein CLAVATA 3 (96 aa).

The signal sequence occupies residues 1 to 21; the sequence is MDSKSFLLLLLLFCFLFLHDA. The disordered stretch occupies residues 68–96; that stretch reads ELRTVPSGPDPLHHHVNPPRQPRNNFQLP. 2 positions are modified to hydroxyproline: Pro-73 and Pro-76. Pro-76 carries O-linked (Ara...) hydroxyproline glycosylation.

This sequence belongs to the CLV3/ESR signal peptide family. In terms of assembly, interacts with the extracellular leucine-rich repeat region of CLV1. Interacts with CLV2. CLV3-derived CLE peptides interacts with a tetrameric complex made of two CLV2/CRN heterodimers. Post-translationally, the MCLV3 peptide contains two hydroxyprolines, but hydroxylation had no direct effect on MCLV3 activity. In terms of processing, the O-glycosylation (arabinosylation) of the hydroxyproline P-76 enhances binding affinity of the MCLV3 peptide for its receptor. As to expression, first detected in heart stage embryos in a patch of cells between the developing cotyledons. In vegetative and inflorescence meristems, expressed in a small cone of cells at the meristem apex.

The protein resides in the secreted. The protein localises to the extracellular space. In terms of biological role, extracellular signal that regulates meristem maintenance. Acts with CLV1 as a ligand-receptor pair in a signal transduction pathway coordinating growth between adjacent meristematic regions and controlling the balance between meristem cell proliferation and differentiation. Its function is as follows. The secreted peptide MCLV3 activates a signal transduction cascade to restrict WUSCHEL (WUS) expression, inducing shoot and root meristem consumption as cells differentiated into other organs. This chain is Protein CLAVATA 3, found in Arabidopsis thaliana (Mouse-ear cress).